We begin with the raw amino-acid sequence, 396 residues long: Gap junction gamma-1 protein (396 aa).

Residues 1-18 lie on the Cytoplasmic side of the membrane; sequence MSWSFLTRLLEEIHNHST. Residues 19–39 traverse the membrane as a helical segment; it reads FVGKIWLTVLIVFRIVLTAVG. Over 40–75 the chain is Extracellular; that stretch reads GESIYYDEQSKFVCNTEQPGCENVCYDAFAPLSHVR. The helical transmembrane segment at 76-96 threads the bilayer; sequence FWVFQIILVATPSVMYLGYAI. Topologically, residues 97 to 175 are cytoplasmic; the sequence is HKIAKMEHGE…RRIREDGLMK (79 aa). The disordered stretch occupies residues 145-165; sequence ELESEKENKEQSQPKPKHDGR. Positions 147–156 are enriched in basic and acidic residues; sequence ESEKENKEQS. A helical membrane pass occupies residues 176–198; it reads IYVLQLLARTVFEVGFLIGQYFL. Over 199-229 the chain is Extracellular; it reads YGFQVHPFYVCSRLPCPHKIDCFISRPTEKT. Residues 230 to 250 form a helical membrane-spanning segment; it reads IFLLIMYGVTGLCLLLNIWEM. Over 251 to 396 the chain is Cytoplasmic; the sequence is LHLGFGTIRD…SGDGKTSVWI (146 aa). A coiled-coil region spans residues 303–358; the sequence is ELSNAKIAYKQNKANIAQEQQYGSHEEHLPADLETLQREIRMAQERLDLAIQAYHH. The tract at residues 357–396 is disordered; it reads HHQNNPHGPREKKAKVGSKSGSNKSSISSKSGDGKTSVWI. Low complexity predominate over residues 373–396; that stretch reads GSKSGSNKSSISSKSGDGKTSVWI.

It belongs to the connexin family. Gamma-type subfamily. As to quaternary structure, a connexon is composed of a hexamer of connexins. Interacts with CNST.

It is found in the cell membrane. The protein resides in the cell junction. It localises to the gap junction. Functionally, one gap junction consists of a cluster of closely packed pairs of transmembrane channels, the connexons, through which materials of low MW diffuse from one cell to a neighboring cell. The sequence is that of Gap junction gamma-1 protein (GJC1) from Cricetulus griseus (Chinese hamster).